We begin with the raw amino-acid sequence, 133 residues long: ATP synthase epsilon chain, chloroplastic (133 aa).

The protein belongs to the ATPase epsilon chain family. In terms of assembly, F-type ATPases have 2 components, CF(1) - the catalytic core - and CF(0) - the membrane proton channel. CF(1) has five subunits: alpha(3), beta(3), gamma(1), delta(1), epsilon(1). CF(0) has three main subunits: a, b and c.

Its subcellular location is the plastid. The protein resides in the chloroplast thylakoid membrane. In terms of biological role, produces ATP from ADP in the presence of a proton gradient across the membrane. This Cyanidium caldarium (Red alga) protein is ATP synthase epsilon chain, chloroplastic.